The primary structure comprises 255 residues: H-2 class II histocompatibility antigen, E-K alpha chain (255 aa).

The signal sequence occupies residues 1–25 (MATIGALVLRFFFIAVLMSSQKSWA). An alpha-1 region spans residues 26–109 (IKEEHTIIQA…ERSNNTPDAN (84 aa)). Topologically, residues 26–216 (IKEEHTIIQA…EKTLLPETKE (191 aa)) are extracellular. Residues 110–203 (VAPEVTVLSR…GLEEPLRKHW (94 aa)) are alpha-2. The 93-residue stretch at 112–204 (PEVTVLSRSP…LEEPLRKHWE (93 aa)) folds into the Ig-like C1-type domain. C132 and C188 are joined by a disulfide. A glycan (N-linked (GlcNAc...) asparagine) is linked at N143. A connecting peptide region spans residues 204 to 216 (EFEEKTLLPETKE). The chain crosses the membrane as a helical span at residues 217–242 (NVVCALGLFVGLVGIVVGIILIMKGI). Over 243–255 (KKRNVVERRQGAL) the chain is Cytoplasmic.

Belongs to the MHC class II family.

The protein resides in the membrane. The chain is H-2 class II histocompatibility antigen, E-K alpha chain from Mus musculus (Mouse).